Consider the following 583-residue polypeptide: Septin-9 (583 aa).

Methionine 1 carries the N-acetylmethionine modification. The span at 1–14 (MKKSYSGVTRTSSG) shows a compositional bias: polar residues. Residues 1 to 49 (MKKSYSGVTRTSSGRLRRLADPTGPALKRSFEVEEIEPPNSTPPRRVQT) are disordered. Serine 30 carries the post-translational modification Phosphoserine. 2 positions are modified to phosphothreonine: threonine 42 and threonine 49. Lysine 62 carries the N6-acetyllysine modification. A disordered region spans residues 79-105 (DSLSQRSPKPSLRRVELAGAKAPEPMS). A phosphoserine mark is found at serine 82, serine 85, and serine 89. The residue at position 143 (threonine 143) is a Phosphothreonine. The tract at residues 166-252 (VETPASKIPE…TPSCVGDMAD (87 aa)) is disordered. The span at 204–221 (LPSQTLENSEAPMSQLQS) shows a compositional bias: polar residues. Tyrosine 276 carries the phosphotyrosine modification. The Septin-type G domain occupies 293 to 565 (QGFEFNIMVV…EAYRVKRLNE (273 aa)). Residues 303–310 (GQSGLGKS) are G1 motif. 303 to 310 (GQSGLGKS) is a GTP binding site. 2 positions are modified to phosphoserine: serine 325 and serine 330. GTP contacts are provided by residues threonine 337, glycine 363, 443–451 (KADTLTLEE), glycine 499, and arginine 514. The tract at residues 360-363 (DTPG) is G3 motif. The tract at residues 442 to 445 (AKAD) is G4 motif.

Belongs to the TRAFAC class TrmE-Era-EngA-EngB-Septin-like GTPase superfamily. Septin GTPase family. Septins polymerize into heterooligomeric protein complexes that form filaments, and associate with cellular membranes, actin filaments, and microtubules. GTPase activity is required for filament formation. Interacts with SEPTIN2, SEPTIN6, SEPTIN7, SEPTIN11 and SEPTIN14. Interacts with RTKN and ARHGEF18. Expressed in all tissues examined except muscle. Isoforms are differentially expressed in testes, kidney, liver, heart, spleen and brain.

Its subcellular location is the cytoplasm. It is found in the cytoskeleton. Functionally, filament-forming cytoskeletal GTPase. May play a role in cytokinesis (Potential). This chain is Septin-9, found in Mus musculus (Mouse).